We begin with the raw amino-acid sequence, 228 residues long: 3-dehydroquinate dehydratase (228 aa).

Residues 30-32 (EWR) and Arg62 each bind 3-dehydroquinate. His118 serves as the catalytic Proton donor/acceptor. Lys143 (schiff-base intermediate with substrate) is an active-site residue. 3 residues coordinate 3-dehydroquinate: Arg186, Ser205, and Gln209.

The protein belongs to the type-I 3-dehydroquinase family. As to quaternary structure, homodimer.

The catalysed reaction is 3-dehydroquinate = 3-dehydroshikimate + H2O. The protein operates within metabolic intermediate biosynthesis; chorismate biosynthesis; chorismate from D-erythrose 4-phosphate and phosphoenolpyruvate: step 3/7. Functionally, involved in the third step of the chorismate pathway, which leads to the biosynthesis of aromatic amino acids. Catalyzes the cis-dehydration of 3-dehydroquinate (DHQ) and introduces the first double bond of the aromatic ring to yield 3-dehydroshikimate. The sequence is that of 3-dehydroquinate dehydratase from Streptococcus pyogenes serotype M12 (strain MGAS9429).